Reading from the N-terminus, the 176-residue chain is Ribosome rescue factor SmrB (176 aa).

The region spanning 93–168 is the Smr domain; sequence LDLHGYRQSE…GDAALLVLID (76 aa).

This sequence belongs to the SmrB family. As to quaternary structure, associates with collided ribosomes, but not with correctly translating polysomes.

In terms of biological role, acts as a ribosome collision sensor. Detects stalled/collided disomes (pairs of ribosomes where the leading ribosome is stalled and a second ribosome has collided with it) and endonucleolytically cleaves mRNA at the 5' boundary of the stalled ribosome. Stalled/collided disomes form a new interface (primarily via the 30S subunits) that binds SmrB. Cleaved mRNA becomes available for tmRNA ligation, leading to ribosomal subunit dissociation and rescue of stalled ribosomes. This is Ribosome rescue factor SmrB from Shewanella baltica (strain OS155 / ATCC BAA-1091).